An 874-amino-acid polypeptide reads, in one-letter code: Alanine--tRNA ligase (874 aa).

4 residues coordinate Zn(2+): histidine 564, histidine 568, cysteine 665, and histidine 669.

It belongs to the class-II aminoacyl-tRNA synthetase family. It depends on Zn(2+) as a cofactor.

It is found in the cytoplasm. It catalyses the reaction tRNA(Ala) + L-alanine + ATP = L-alanyl-tRNA(Ala) + AMP + diphosphate. Catalyzes the attachment of alanine to tRNA(Ala) in a two-step reaction: alanine is first activated by ATP to form Ala-AMP and then transferred to the acceptor end of tRNA(Ala). Also edits incorrectly charged Ser-tRNA(Ala) and Gly-tRNA(Ala) via its editing domain. The chain is Alanine--tRNA ligase from Burkholderia thailandensis (strain ATCC 700388 / DSM 13276 / CCUG 48851 / CIP 106301 / E264).